A 547-amino-acid polypeptide reads, in one-letter code: ATP synthase subunit alpha (547 aa).

173–180 (GDRQTGKT) provides a ligand contact to ATP.

Belongs to the ATPase alpha/beta chains family. As to quaternary structure, F-type ATPases have 2 components, CF(1) - the catalytic core - and CF(0) - the membrane proton channel. CF(1) has five subunits: alpha(3), beta(3), gamma(1), delta(1), epsilon(1). CF(0) has three main subunits: a(1), b(2) and c(9-12). The alpha and beta chains form an alternating ring which encloses part of the gamma chain. CF(1) is attached to CF(0) by a central stalk formed by the gamma and epsilon chains, while a peripheral stalk is formed by the delta and b chains.

It localises to the cell membrane. The catalysed reaction is ATP + H2O + 4 H(+)(in) = ADP + phosphate + 5 H(+)(out). Functionally, produces ATP from ADP in the presence of a proton gradient across the membrane. The alpha chain is a regulatory subunit. This chain is ATP synthase subunit alpha, found in Thermobifida fusca (strain YX).